We begin with the raw amino-acid sequence, 158 residues long: UPF0735 ACT domain-containing protein Bsph_3944 (158 aa).

An ACT domain is found at 80–155 (TVFLQLQDRK…FVESAEVISS (76 aa)).

Belongs to the UPF0735 family.

In Lysinibacillus sphaericus (strain C3-41), this protein is UPF0735 ACT domain-containing protein Bsph_3944.